Consider the following 469-residue polypeptide: 3-isopropylmalate dehydratase large subunit 1 (469 aa).

[4Fe-4S] cluster-binding residues include Cys344, Cys404, and Cys407.

It belongs to the aconitase/IPM isomerase family. LeuC type 1 subfamily. In terms of assembly, heterodimer of LeuC and LeuD. [4Fe-4S] cluster serves as cofactor.

It catalyses the reaction (2R,3S)-3-isopropylmalate = (2S)-2-isopropylmalate. The protein operates within amino-acid biosynthesis; L-leucine biosynthesis; L-leucine from 3-methyl-2-oxobutanoate: step 2/4. Its function is as follows. Catalyzes the isomerization between 2-isopropylmalate and 3-isopropylmalate, via the formation of 2-isopropylmaleate. The chain is 3-isopropylmalate dehydratase large subunit 1 from Rubrobacter xylanophilus (strain DSM 9941 / JCM 11954 / NBRC 16129 / PRD-1).